A 55-amino-acid polypeptide reads, in one-letter code: Large ribosomal subunit protein bL33 (55 aa).

The protein belongs to the bacterial ribosomal protein bL33 family.

This Enterobacter sp. (strain 638) protein is Large ribosomal subunit protein bL33.